Here is a 274-residue protein sequence, read N- to C-terminus: 3-deoxy-manno-octulosonate cytidylyltransferase (274 aa).

Belongs to the KdsB family.

Its subcellular location is the cytoplasm. It catalyses the reaction 3-deoxy-alpha-D-manno-oct-2-ulosonate + CTP = CMP-3-deoxy-beta-D-manno-octulosonate + diphosphate. It functions in the pathway nucleotide-sugar biosynthesis; CMP-3-deoxy-D-manno-octulosonate biosynthesis; CMP-3-deoxy-D-manno-octulosonate from 3-deoxy-D-manno-octulosonate and CTP: step 1/1. Its pathway is bacterial outer membrane biogenesis; lipopolysaccharide biosynthesis. Its function is as follows. Activates KDO (a required 8-carbon sugar) for incorporation into bacterial lipopolysaccharide in Gram-negative bacteria. The protein is 3-deoxy-manno-octulosonate cytidylyltransferase of Bordetella avium (strain 197N).